Reading from the N-terminus, the 329-residue chain is Replication factor C small subunit (329 aa).

Position 51–58 (Gly51–Thr58) interacts with ATP.

The protein belongs to the activator 1 small subunits family. RfcS subfamily. As to quaternary structure, heteromultimer composed of small subunits (RfcS) and large subunits (RfcL).

Functionally, part of the RFC clamp loader complex which loads the PCNA sliding clamp onto DNA. In Staphylothermus marinus (strain ATCC 43588 / DSM 3639 / JCM 9404 / F1), this protein is Replication factor C small subunit.